Here is a 460-residue protein sequence, read N- to C-terminus: L-seryl-tRNA(Sec) selenium transferase (460 aa).

Lys293 bears the N6-(pyridoxal phosphate)lysine mark.

Belongs to the SelA family. It depends on pyridoxal 5'-phosphate as a cofactor.

It is found in the cytoplasm. The enzyme catalyses L-seryl-tRNA(Sec) + selenophosphate + H(+) = L-selenocysteinyl-tRNA(Sec) + phosphate. The protein operates within aminoacyl-tRNA biosynthesis; selenocysteinyl-tRNA(Sec) biosynthesis; selenocysteinyl-tRNA(Sec) from L-seryl-tRNA(Sec) (bacterial route): step 1/1. In terms of biological role, converts seryl-tRNA(Sec) to selenocysteinyl-tRNA(Sec) required for selenoprotein biosynthesis. The protein is L-seryl-tRNA(Sec) selenium transferase of Haemophilus ducreyi (strain 35000HP / ATCC 700724).